Reading from the N-terminus, the 497-residue chain is G protein-coupled receptor gprM (497 aa).

N-linked (GlcNAc...) asparagine glycosylation occurs at N3. A run of 5 helical transmembrane segments spans residues 66–86, 98–118, 138–158, 179–199, and 221–241; these read ISVAILPLCIFLLVSYAVLPV, FTLGICFMEASKIAFIIPLGV, CAFTGSLLLLGGWMVVVWSFL, WGALIFGWVVPAVGLTVMLIL, and YWIPIISFAVAALILQLATMA. N259 carries N-linked (GlcNAc...) asparagine glycosylation. The next 2 helical transmembrane spans lie at 293–313 and 357–377; these read VTLVLIIIANVIFFSVTFIEL and LLLAVLVLLSLVGFWNFILFA. A glycan (N-linked (GlcNAc...) asparagine) is linked at N421. Residues 428–497 form a disordered region; sequence YKSPSPMVRS…APAVYREYDD (70 aa).

The protein belongs to the G-protein coupled receptor GPR1/git3 family. Interacts with gpaA.

The protein localises to the cell membrane. Functionally, g protein-coupled receptor that plays a role in conidiation and regulation of the biosynthesis of secondary metabolites such as dihydroxynaphthalene (DHN)-melanin, via interaction with the G-protein complex alpha subunit gpaA. The protein is G protein-coupled receptor gprM of Aspergillus fumigatus (strain CBS 144.89 / FGSC A1163 / CEA10) (Neosartorya fumigata).